The following is a 436-amino-acid chain: Amino acid transporter AVT3C (436 aa).

The span at 1-13 shows a compositional bias: polar residues; the sequence is MGFQNEASSSSYT. The interval 1-21 is disordered; that stretch reads MGFQNEASSSSYTLKIPPPAR. Residues 1 to 38 are Cytoplasmic-facing; sequence MGFQNEASSSSYTLKIPPPAREDSPLLGKGPPLSSQFK. Residues 39-59 traverse the membrane as a helical segment; sequence TFANVFIAVVGAGVLGLPYAF. Residues 60–65 lie on the Vacuolar side of the membrane; it reads KRTGWL. Residues 66 to 86 traverse the membrane as a helical segment; the sequence is MGVLLLVSVSVLTHHCMMLLV. Residues 87–118 lie on the Cytoplasmic side of the membrane; it reads YTRRKLDSFNAGISKIGSFGDLGFAVCGSLGR. Residues 119 to 139 form a helical membrane-spanning segment; it reads IVVDLFIILSQAGFCVGYLIF. The Vacuolar segment spans residues 140–166; it reads IGTTLANLSDPESPTSLRHQFTRLGSE. Residues 167–187 traverse the membrane as a helical segment; that stretch reads FLGVSSKSLYIWGCFPFQLGL. The Cytoplasmic portion of the chain corresponds to 188–195; that stretch reads NSIKTLTH. The chain crosses the membrane as a helical span at residues 196 to 216; it reads LAPLSIFADIVDLGAMAVVIV. Residues 217 to 228 lie on the Vacuolar side of the membrane; the sequence is EDSMIILKQRPD. The helical transmembrane segment at 229-249 threads the bilayer; the sequence is VVAFGGMSLFLYGMGVAVYSF. Residues 250–273 lie on the Cytoplasmic side of the membrane; the sequence is EGVGMVLPLESEMKDKDKFGKVLA. Residues 274–294 form a helical membrane-spanning segment; it reads LGMGFISLIYIAFGILGYLAF. Residues 295 to 309 lie on the Vacuolar side of the membrane; it reads GEDTMDIITANLGAG. The helical transmembrane segment at 310 to 330 threads the bilayer; it reads LVSTVVQLGLCINLFFTFPLM. The Cytoplasmic segment spans residues 331 to 352; that stretch reads MNPVFEIVERRFSRGMYSAWLR. Residues 353–373 form a helical membrane-spanning segment; the sequence is WVLVLAVTLVALFVPNFADFL. Residues 374-376 lie on the Vacuolar side of the membrane; it reads SLV. Residues 377-397 form a helical membrane-spanning segment; sequence GSSTCCVLGFVLPALFHLLVF. The Cytoplasmic segment spans residues 398–411; sequence KEEMGWLQWSSDTA. The helical transmembrane segment at 412 to 432 threads the bilayer; sequence IVVLGVVLAVSGTWSSLSEIF. Over 433–436 the chain is Vacuolar; it reads SVKV.

It belongs to the amino acid/polyamine transporter 2 family. Amino acid/auxin permease (AAAP) (TC 2.A.18.8) subfamily. Ubiquitous.

The protein localises to the vacuole membrane. In terms of biological role, translocates preferentially neutral amino acids from the vacuole to the cytoplasm. This Arabidopsis thaliana (Mouse-ear cress) protein is Amino acid transporter AVT3C.